The following is a 927-amino-acid chain: BTB/POZ domain-containing protein KCTD19 (927 aa).

Positions 18–72 constitute a BTB 1 domain; sequence NVGGWHFSVPRSKLAQFPDSLLWKEASALTSSENQRLFIDRDGSTFRHVHYYLYT. Ser270 carries the phosphoserine modification. The BTB 2 domain maps to 399-486; sequence IKLYVGSHWY…YHIPALSEAL (88 aa). Residues 664–760 form a disordered region; the sequence is VEEASLHVPS…NANGTDNPGA (97 aa). The segment covering 731 to 743 has biased composition (basic and acidic residues); that stretch reads DWGKQRPKDRESP.

As to quaternary structure, identified in a complex with ZNF541, HDAC1 and HSPA2. Identified in a complex with ZNF541 and HDAC1. Identified in a complex with HDAC1, HDAC2, DNTTIP1 and ZNF541. As to expression, detected in adult testis.

It is found in the nucleus. Transcription regulator which is essential for male fertility and for the completion of meiotic prophase in spermatocytes. Regulates progression of the pachytene stage of meiotic prophase and promotes the transcriptional activation activity ZNF541. Required for the organization of chromosomes during metaphase I. The sequence is that of BTB/POZ domain-containing protein KCTD19 (Kctd19) from Mus musculus (Mouse).